A 256-amino-acid chain; its full sequence is Putative cysteine-rich repeat secretory protein 21 (256 aa).

Residues 1–30 (MYSSVSKRLVSVHILVVVALQLLFIPNVLS) form the signal peptide. 2 consecutive Gnk2-homologous domains span residues 37–139 (YLHH…SIDT) and 145–253 (YQNN…LYPF).

Belongs to the cysteine-rich repeat secretory protein family.

Its subcellular location is the secreted. In Arabidopsis thaliana (Mouse-ear cress), this protein is Putative cysteine-rich repeat secretory protein 21 (CRRSP21).